A 322-amino-acid polypeptide reads, in one-letter code: MARDKIALIGSGQIGGTLAHLIGLKELGDVVMFDIAEGIPQGKSLDIAQSSPVDGFDAKLTGANSYEALEGARVCIVTAGIPRKPGMSRDDLLSINLKVMEQVGAGIKKYAPDAFVICITNPLDAMVWALQKASGMPAKKVVGMAGVLDSSRFRYFLADEFDVSVEDVTAFVLGGHGDSMVPLVKYSTVAGIPLPDLVKMGWTSQARIDEIVDRTRNGGAEIVNLLKTGSAFYAPAASAIAMAESYLRDKKRVLPCAAYLNGEFGVKDMYVGVPVVIGARGVERIVEIELAGKDREAFDKSVGAVQGLIDACKKIAPDLLGK.

Residues 10 to 15 (GSGQIG) and Asp-34 each bind NAD(+). The substrate site is built by Arg-83 and Arg-89. NAD(+) is bound by residues Asn-96 and 119-121 (ITN). Residues Asn-121 and Arg-152 each coordinate substrate. His-176 serves as the catalytic Proton acceptor.

Belongs to the LDH/MDH superfamily. MDH type 3 family.

It carries out the reaction (S)-malate + NAD(+) = oxaloacetate + NADH + H(+). In terms of biological role, catalyzes the reversible oxidation of malate to oxaloacetate. The polypeptide is Malate dehydrogenase (Nitrobacter hamburgensis (strain DSM 10229 / NCIMB 13809 / X14)).